Here is a 138-residue protein sequence, read N- to C-terminus: Basic phospholipase A2 homolog promutoxin (138 aa).

Positions 1–16 are cleaved as a signal peptide; it reads MRTLWIMAVLLLGVEG. Disulfide bonds link Cys42-Cys132, Cys44-Cys60, Cys59-Cys112, Cys65-Cys138, Cys66-Cys105, Cys73-Cys98, and Cys91-Cys103. The important for membrane-damaging activities in eukaryotes and bacteria; heparin-binding stretch occupies residues 122-133; it reads KKHRVTMKFLCK.

This sequence belongs to the phospholipase A2 family. Group II subfamily. R49 sub-subfamily. In terms of assembly, homodimer; non-covalently linked. As to expression, expressed by the venom gland.

It is found in the secreted. Its function is as follows. Snake venom phospholipase A2 homolog that lacks enzymatic activity. Exhibits potent myotoxicity causing myonecrosis and edema in the gastrocnemius muscle of mice. Is also able to stimulate the release of IL12 (IL12A-IL12B), TNF-alpha (TNF), IL6 and IL1-beta (IL1B) from human monocytes, and induce IL2, TNFalpha and IL6 release from T-cells. A model of myotoxic mechanism has been proposed: an apo Lys49-PLA2 is activated by the entrance of a hydrophobic molecule (e.g. fatty acid) at the hydrophobic channel of the protein leading to a reorientation of a monomer. This reorientation causes a transition between 'inactive' to 'active' states, causing alignment of C-terminal and membrane-docking sites (MDoS) side-by-side and putting the membrane-disruption sites (MDiS) in the same plane, exposed to solvent and in a symmetric position for both monomers. The MDoS region stabilizes the toxin on membrane by the interaction of charged residues with phospholipid head groups. Subsequently, the MDiS region destabilizes the membrane with penetration of hydrophobic residues. This insertion causes a disorganization of the membrane, allowing an uncontrolled influx of ions (i.e. calcium and sodium), and eventually triggering irreversible intracellular alterations and cell death. The sequence is that of Basic phospholipase A2 homolog promutoxin from Protobothrops mucrosquamatus (Taiwan habu).